Here is a 403-residue protein sequence, read N- to C-terminus: Arginine biosynthesis bifunctional protein ArgJ (403 aa).

The substrate site is built by Thr149, Lys175, Thr186, Glu272, Asn398, and Thr403. Thr186 functions as the Nucleophile in the catalytic mechanism.

The protein belongs to the ArgJ family. Heterotetramer of two alpha and two beta chains.

It localises to the cytoplasm. It catalyses the reaction N(2)-acetyl-L-ornithine + L-glutamate = N-acetyl-L-glutamate + L-ornithine. It carries out the reaction L-glutamate + acetyl-CoA = N-acetyl-L-glutamate + CoA + H(+). It functions in the pathway amino-acid biosynthesis; L-arginine biosynthesis; L-ornithine and N-acetyl-L-glutamate from L-glutamate and N(2)-acetyl-L-ornithine (cyclic): step 1/1. It participates in amino-acid biosynthesis; L-arginine biosynthesis; N(2)-acetyl-L-ornithine from L-glutamate: step 1/4. Its function is as follows. Catalyzes two activities which are involved in the cyclic version of arginine biosynthesis: the synthesis of N-acetylglutamate from glutamate and acetyl-CoA as the acetyl donor, and of ornithine by transacetylation between N(2)-acetylornithine and glutamate. In Caldanaerobacter subterraneus subsp. tengcongensis (strain DSM 15242 / JCM 11007 / NBRC 100824 / MB4) (Thermoanaerobacter tengcongensis), this protein is Arginine biosynthesis bifunctional protein ArgJ.